The sequence spans 621 residues: CEP295 N-terminal-like protein (621 aa).

The interval 142-253 (GGRARENEPD…RSKGADLERS (112 aa)) is disordered. A compositionally biased stretch (basic residues) spans 159 to 170 (RSARPPRAKEKH). The segment covering 171–185 (RAALSEERSCREELG) has biased composition (basic and acidic residues). The segment covering 203-213 (KPQTTKATGRM) has biased composition (polar residues). Over residues 219–229 (PPEKRKGRPEP) the composition is skewed to basic and acidic residues. Residues 328 to 359 (QCTLREKNKWQKELELAFEELFNINRKLKKHL) are a coiled coil. Disordered stretches follow at residues 385 to 421 (CGAGTPRGKKMADPEMLPAGEPRSPAEEEAQQAASKT), 491 to 529 (DQADRVGSTASRQRQKAEMEQRRQKQLESLEQMEHPDMS), and 543 to 586 (REQR…DRHS). The stretch at 498–525 (STASRQRQKAEMEQRRQKQLESLEQMEH) forms a coiled coil. A compositionally biased stretch (basic and acidic residues) spans 505–529 (QKAEMEQRRQKQLESLEQMEHPDMS). Polar residues predominate over residues 568-578 (ELSTTSPSGTS).

The protein resides in the cell projection. It is found in the cilium. In Homo sapiens (Human), this protein is CEP295 N-terminal-like protein.